The primary structure comprises 226 residues: DnaJ homolog subfamily C member 30, mitochondrial (226 aa).

A mitochondrion-targeting transit peptide spans 1-38 (MAAMRWRWWQRLLPWRLLQARGFPQNSAPSLGLGARTY). A J domain is found at 49–114 (ALYDLLGVPS…TLRRKYDRGL (66 aa)). The disordered stretch occupies residues 116–157 (SDEDLRGPGVRPSRTPAPDPGSPRTPPPTSRTHDGSRASPGA). Over residues 130 to 144 (TPAPDPGSPRTPPPT) the composition is skewed to pro residues. Residues 208–225 (DTAAIFLIFSIFIIIGFY) traverse the membrane as a helical segment.

Associates with the ATP synthase complex. Interacts with MT-ATP6; interaction is direct. Interacts with ATP5MC2; interaction is direct. Expressed in brain, heart, kidney, liver, lung, spleen, stomach and testis. Highly expressed in the brain. In the neocortex, expressed in most, if not all, glutamatergic excitatory projection neurons (pyramidal) and many interneurons, with the strongest signal noticeably in large pyramidal neurons of layer 3C. Also present in pyramidal neurons of layer 3C PNs of the superior temporal cortex, as well as in pyramidal neurons (Betz cells) of the layer 5B primary motor cortex (at protein level).

The protein resides in the mitochondrion inner membrane. In terms of biological role, mitochondrial protein enriched in neurons that acts as a regulator of mitochondrial respiration. Associates with the ATP synthase complex and facilitates ATP synthesis. May be a chaperone protein involved in the turnover of the subunits of mitochondrial complex I N-module. It facilitates the degradation of N-module subunits damaged by oxidative stress, and contributes to complex I functional efficiency. This Homo sapiens (Human) protein is DnaJ homolog subfamily C member 30, mitochondrial.